We begin with the raw amino-acid sequence, 408 residues long: Tripartite motif containing 13 (408 aa).

The segment at 10–58 adopts an RING-type zinc-finger fold; the sequence is CPICCSLFDDPRVLPCSHNFCKKCLDGVLEENSRTMQWRPSSFKCPTCR. Residues 89–131 form a B box-type zinc finger; the sequence is PKMPVCKEHSDQPLNIFCSTDLKLICGSCATTGEHKKHVFSSI. Zn(2+)-binding residues include Cys94, His97, Cys117, and His123. A helical membrane pass occupies residues 322–342; the sequence is ILVVACLILLLVTFLCAYPFI.

The protein localises to the endoplasmic reticulum membrane. It functions in the pathway protein modification; protein ubiquitination. Functionally, E3 ubiquitin ligase involved in the retrotranslocation and turnover of membrane and secretory proteins from the ER through a set of processes named ER-associated degradation (ERAD). This process acts on misfolded proteins as well as in the regulated degradation of correctly folded proteins. The polypeptide is Tripartite motif containing 13 (trim13) (Xenopus tropicalis (Western clawed frog)).